Reading from the N-terminus, the 157-residue chain is Probable cyclic pyranopterin monophosphate synthase (157 aa).

Residues 75-77 (MCH) and 111-112 (ME) each bind substrate. Asp-126 is a catalytic residue.

It belongs to the MoaC family. Homohexamer; trimer of dimers.

It catalyses the reaction (8S)-3',8-cyclo-7,8-dihydroguanosine 5'-triphosphate = cyclic pyranopterin phosphate + diphosphate. Its pathway is cofactor biosynthesis; molybdopterin biosynthesis. In terms of biological role, catalyzes the conversion of (8S)-3',8-cyclo-7,8-dihydroguanosine 5'-triphosphate to cyclic pyranopterin monophosphate (cPMP). This chain is Probable cyclic pyranopterin monophosphate synthase, found in Methanosarcina mazei (strain ATCC BAA-159 / DSM 3647 / Goe1 / Go1 / JCM 11833 / OCM 88) (Methanosarcina frisia).